We begin with the raw amino-acid sequence, 220 residues long: Ripening-related protein grip22 (220 aa).

The N-terminal stretch at 1–27 (MAKSALVWLASVCLVFNILSLPFLALG) is a signal peptide.

This sequence belongs to the kiwellin family. In terms of tissue distribution, expressed in ripening fruits.

It is found in the secreted. This chain is Ripening-related protein grip22 (grip22), found in Vitis vinifera (Grape).